The primary structure comprises 232 residues: Putative membrane protein ORF8 (232 aa).

Over residues Gly71–Asp84 the composition is skewed to low complexity. Positions Gly71–His121 are disordered. 2 helical membrane passes run Val166–Ala182 and Leu195–Val211.

It is found in the membrane. The protein is Putative membrane protein ORF8 (ORF8) of Ictalurid herpesvirus 1 (strain Auburn) (IcHV-1).